Consider the following 721-residue polypeptide: Polyribonucleotide nucleotidyltransferase (721 aa).

Asp511 and Asp517 together coordinate Mg(2+). Positions 577–637 (PSTDFFHINP…SGVQAAREHI (61 aa)) constitute a KH domain. The 68-residue stretch at 654–721 (GDIHKGIVKK…KGNKISLGIA (68 aa)) folds into the S1 motif domain.

It belongs to the polyribonucleotide nucleotidyltransferase family. It depends on Mg(2+) as a cofactor.

The protein resides in the cytoplasm. The enzyme catalyses RNA(n+1) + phosphate = RNA(n) + a ribonucleoside 5'-diphosphate. Functionally, involved in mRNA degradation. Catalyzes the phosphorolysis of single-stranded polyribonucleotides processively in the 3'- to 5'-direction. The protein is Polyribonucleotide nucleotidyltransferase of Sulfurimonas denitrificans (strain ATCC 33889 / DSM 1251) (Thiomicrospira denitrificans (strain ATCC 33889 / DSM 1251)).